Here is a 457-residue protein sequence, read N- to C-terminus: NADH-ubiquinone oxidoreductase chain 4 (457 aa).

The next 12 membrane-spanning stretches (helical) occupy residues 22–42 (NLWP…IALI), 59–79 (SMQL…LIAS), 95–115 (IVLV…LELI), 116–136 (LFYI…TRWG), 148–168 (FIFY…ALYF), 191–211 (LTVW…IYGF), 223–243 (PVAG…YGLM), 257–277 (SSLP…IICI), 282–302 (LKAL…AGVF), 309–329 (INGA…LFAL), 350–370 (LILP…LGFP), and 433–453 (LFLL…LVLI).

The protein belongs to the complex I subunit 4 family.

Its subcellular location is the mitochondrion membrane. It carries out the reaction a ubiquinone + NADH + 5 H(+)(in) = a ubiquinol + NAD(+) + 4 H(+)(out). Core subunit of the mitochondrial membrane respiratory chain NADH dehydrogenase (Complex I) that is believed to belong to the minimal assembly required for catalysis. Complex I functions in the transfer of electrons from NADH to the respiratory chain. The immediate electron acceptor for the enzyme is believed to be ubiquinone. This is NADH-ubiquinone oxidoreductase chain 4 (ND4) from Arbacia lixula (Black urchin).